The chain runs to 212 residues: 3-demethoxyubiquinol 3-hydroxylase (212 aa).

Residues 1 to 14 (MTSPSSRTPRGSTP) show a composition bias toward low complexity. Positions 1 to 22 (MTSPSSRTPRGSTPPFEPSADE) are disordered. Positions 58, 89, 92, 141, 173, and 176 each coordinate Fe cation.

Belongs to the COQ7 family. Requires Fe cation as cofactor.

It is found in the cell membrane. The enzyme catalyses a 5-methoxy-2-methyl-3-(all-trans-polyprenyl)benzene-1,4-diol + AH2 + O2 = a 3-demethylubiquinol + A + H2O. Its pathway is cofactor biosynthesis; ubiquinone biosynthesis. Catalyzes the hydroxylation of 2-nonaprenyl-3-methyl-6-methoxy-1,4-benzoquinol during ubiquinone biosynthesis. The polypeptide is 3-demethoxyubiquinol 3-hydroxylase (Rhodospirillum rubrum (strain ATCC 11170 / ATH 1.1.1 / DSM 467 / LMG 4362 / NCIMB 8255 / S1)).